The following is a 477-amino-acid chain: Glycogen synthase (477 aa).

Lys-15 serves as a coordination point for ADP-alpha-D-glucose.

It belongs to the glycosyltransferase 1 family. Bacterial/plant glycogen synthase subfamily.

It carries out the reaction [(1-&gt;4)-alpha-D-glucosyl](n) + ADP-alpha-D-glucose = [(1-&gt;4)-alpha-D-glucosyl](n+1) + ADP + H(+). The protein operates within glycan biosynthesis; glycogen biosynthesis. Its function is as follows. Synthesizes alpha-1,4-glucan chains using ADP-glucose. The polypeptide is Glycogen synthase (Escherichia fergusonii (strain ATCC 35469 / DSM 13698 / CCUG 18766 / IAM 14443 / JCM 21226 / LMG 7866 / NBRC 102419 / NCTC 12128 / CDC 0568-73)).